We begin with the raw amino-acid sequence, 370 residues long: GMP synthase [glutamine-hydrolyzing] subunit B (370 aa).

The GMPS ATP-PPase domain occupies 3 to 189; that stretch reads FDPQKFVDEI…LGLPRDIYNR (187 aa). 29–35 contacts ATP; that stretch reads SGGVDST.

As to quaternary structure, heterodimer composed of a glutamine amidotransferase subunit (A) and a GMP-binding subunit (B).

The enzyme catalyses XMP + L-glutamine + ATP + H2O = GMP + L-glutamate + AMP + diphosphate + 2 H(+). It participates in purine metabolism; GMP biosynthesis; GMP from XMP (L-Gln route): step 1/1. Its function is as follows. Catalyzes the synthesis of GMP from XMP. In Sulfurisphaera tokodaii (strain DSM 16993 / JCM 10545 / NBRC 100140 / 7) (Sulfolobus tokodaii), this protein is GMP synthase [glutamine-hydrolyzing] subunit B (guaAB).